The following is a 345-amino-acid chain: NADH-quinone oxidoreductase subunit H (345 aa).

Helical transmembrane passes span 14 to 34 (IILAQVLAVVAFVMISLLFLV), 84 to 104 (FILAPMTSFVLAMIAWAVIPF), 115 to 135 (VAILYVFAVSSLEVYGVIMGG), 161 to 181 (IGLIIIGVILSTGSMNFGDIV), 187 to 207 (GWGFFGWYWLPHFPMVFLFFI), 248 to 268 (YIAIFLMCALTSLLFFGGWLS), 277 to 297 (VLWMVAKMAFFFFIFAMVKAI), and 309 to 329 (LGWKVFLPFSLVWVVFVAFAA).

Belongs to the complex I subunit 1 family. As to quaternary structure, NDH-1 is composed of 14 different subunits. Subunits NuoA, H, J, K, L, M, N constitute the membrane sector of the complex.

The protein localises to the cell inner membrane. It carries out the reaction a quinone + NADH + 5 H(+)(in) = a quinol + NAD(+) + 4 H(+)(out). NDH-1 shuttles electrons from NADH, via FMN and iron-sulfur (Fe-S) centers, to quinones in the respiratory chain. The immediate electron acceptor for the enzyme in this species is believed to be ubiquinone. Couples the redox reaction to proton translocation (for every two electrons transferred, four hydrogen ions are translocated across the cytoplasmic membrane), and thus conserves the redox energy in a proton gradient. This subunit may bind ubiquinone. This is NADH-quinone oxidoreductase subunit H from Ruegeria pomeroyi (strain ATCC 700808 / DSM 15171 / DSS-3) (Silicibacter pomeroyi).